A 206-amino-acid polypeptide reads, in one-letter code: Outer-membrane lipoprotein LolB (206 aa).

An N-terminal signal peptide occupies residues 1-21; sequence MHERNYAVFRLLPLASLLLAA. The N-palmitoyl cysteine moiety is linked to residue cysteine 22. Cysteine 22 carries S-diacylglycerol cysteine lipidation.

The protein belongs to the LolB family. As to quaternary structure, monomer.

It localises to the cell outer membrane. Its function is as follows. Plays a critical role in the incorporation of lipoproteins in the outer membrane after they are released by the LolA protein. This Sodalis glossinidius (strain morsitans) protein is Outer-membrane lipoprotein LolB.